A 330-amino-acid polypeptide reads, in one-letter code: Holliday junction branch migration complex subunit RuvB (330 aa).

The interval 1–181 (MEDRLVGCRL…FGVINKLELY (181 aa)) is large ATPase domain (RuvB-L). ATP is bound by residues Leu-20, Arg-21, Gly-62, Lys-65, Thr-66, Thr-67, 128 to 130 (EDY), Arg-171, Tyr-181, and Arg-218. A Mg(2+)-binding site is contributed by Thr-66. Positions 182–252 (SVEELGQIVK…IARTGLEALE (71 aa)) are small ATPAse domain (RuvB-S). Positions 255-330 (EIGLDAVDRN…AYEHFGLKYE (76 aa)) are head domain (RuvB-H). Residues Lys-310 and Arg-315 each contribute to the DNA site.

The protein belongs to the RuvB family. As to quaternary structure, homohexamer. Forms an RuvA(8)-RuvB(12)-Holliday junction (HJ) complex. HJ DNA is sandwiched between 2 RuvA tetramers; dsDNA enters through RuvA and exits via RuvB. An RuvB hexamer assembles on each DNA strand where it exits the tetramer. Each RuvB hexamer is contacted by two RuvA subunits (via domain III) on 2 adjacent RuvB subunits; this complex drives branch migration. In the full resolvosome a probable DNA-RuvA(4)-RuvB(12)-RuvC(2) complex forms which resolves the HJ.

It is found in the cytoplasm. It catalyses the reaction ATP + H2O = ADP + phosphate + H(+). Functionally, the RuvA-RuvB-RuvC complex processes Holliday junction (HJ) DNA during genetic recombination and DNA repair, while the RuvA-RuvB complex plays an important role in the rescue of blocked DNA replication forks via replication fork reversal (RFR). RuvA specifically binds to HJ cruciform DNA, conferring on it an open structure. The RuvB hexamer acts as an ATP-dependent pump, pulling dsDNA into and through the RuvAB complex. RuvB forms 2 homohexamers on either side of HJ DNA bound by 1 or 2 RuvA tetramers; 4 subunits per hexamer contact DNA at a time. Coordinated motions by a converter formed by DNA-disengaged RuvB subunits stimulates ATP hydrolysis and nucleotide exchange. Immobilization of the converter enables RuvB to convert the ATP-contained energy into a lever motion, pulling 2 nucleotides of DNA out of the RuvA tetramer per ATP hydrolyzed, thus driving DNA branch migration. The RuvB motors rotate together with the DNA substrate, which together with the progressing nucleotide cycle form the mechanistic basis for DNA recombination by continuous HJ branch migration. Branch migration allows RuvC to scan DNA until it finds its consensus sequence, where it cleaves and resolves cruciform DNA. The polypeptide is Holliday junction branch migration complex subunit RuvB (Acetivibrio thermocellus (strain ATCC 27405 / DSM 1237 / JCM 9322 / NBRC 103400 / NCIMB 10682 / NRRL B-4536 / VPI 7372) (Clostridium thermocellum)).